Reading from the N-terminus, the 191-residue chain is RRP15-like protein (191 aa).

Residues 1 to 11 (MSTKNRDRLVV) are compositionally biased toward basic and acidic residues. Positions 1–52 (MSTKNRDRLVVTEDSDDDNEREEMSSGGESGEEGPSSVDGGAGDADETVAFP) are disordered. The stretch at 53–84 (AIERRKKKVIKKLTKKEQSLKKSVKEYRIKLA) forms a coiled coil. The span at 119 to 153 (QKTMSDAVKEKMTARERREARQRFDGKNFDSDRFA) shows a compositional bias: basic and acidic residues. The tract at residues 119-191 (QKTMSDAVKE…IDTGNYSDED (73 aa)) is disordered. Positions 166 to 191 (GEDDDGEDQMDIGEEQIDTGNYSDED) are enriched in acidic residues.

This sequence belongs to the RRP15 family.

This chain is RRP15-like protein, found in Caenorhabditis elegans.